The sequence spans 761 residues: Semaphorin-4A (761 aa).

The N-terminal stretch at 1–32 (MALPALGLDPWSLLGLFLFQLLQLLLPTTTAG) is a signal peptide. At 33 to 683 (GGGQGPMPRV…LAAQQSYWPH (651 aa)) the chain is on the extracellular side. In terms of domain architecture, Sema spans 36-494 (QGPMPRVRYY…FSGGVWRVPR (459 aa)). A disulfide bridge links Cys113 with Cys124. 2 N-linked (GlcNAc...) asparagine glycosylation sites follow: Asn120 and Asn135. 3 disulfides stabilise this stretch: Cys142-Cys151, Cys269-Cys379, and Cys293-Cys339. The N-linked (GlcNAc...) asparagine glycan is linked to Asn496. A PSI domain is found at 496 to 548 (NCSVYESCVDCVLARDPHCAWDPESRTCCLLSAPNLNSWKQDMERGNPEWACA). Cystine bridges form between Cys497–Cys514, Cys506–Cys523, and Cys580–Cys624. One can recognise an Ig-like C2-type domain in the interval 573-631 (NSILELPCPHLSALASYYWSHGPAAVPEASSTVYNGSLLLIVQDGVGGLYQCWATENGF). A glycan (N-linked (GlcNAc...) asparagine) is linked at Asn607. A helical transmembrane segment spans residues 684–704 (FVTVTVLFALVLSGALIILVA). The Cytoplasmic portion of the chain corresponds to 705–761 (SPLRALRARGKVQGCETLRPGEKAPLSREQHLQSPKECRTSASDVDADNNCLGTEVA). The segment at 722–749 (LRPGEKAPLSREQHLQSPKECRTSASDV) is disordered. Residues 723–743 (RPGEKAPLSREQHLQSPKECR) show a composition bias toward basic and acidic residues.

This sequence belongs to the semaphorin family. As to quaternary structure, interacts with PLXNB1, PLXNB2, PLXNB3, PLXND1 and TIMD2.

The protein localises to the cell membrane. Cell surface receptor for PLXNB1, PLXNB2, PLXNB3 and PLXND1 that plays an important role in cell-cell signaling. Regulates glutamatergic and GABAergic synapse development. Promotes the development of inhibitory synapses in a PLXNB1-dependent manner and promotes the development of excitatory synapses in a PLXNB2-dependent manner. Plays a role in priming antigen-specific T-cells, promotes differentiation of Th1 T-helper cells, and thereby contributes to adaptive immunity. Promotes phosphorylation of TIMD2. Inhibits angiogenesis. Promotes axon growth cone collapse. Inhibits axonal extension by providing local signals to specify territories inaccessible for growing axons. The polypeptide is Semaphorin-4A (SEMA4A) (Homo sapiens (Human)).